Here is a 277-residue protein sequence, read N- to C-terminus: Putative phosphoenolpyruvate synthase regulatory protein (277 aa).

157-164 (GVSRSGKT) lines the ADP pocket.

Belongs to the pyruvate, phosphate/water dikinase regulatory protein family. PSRP subfamily.

It catalyses the reaction [pyruvate, water dikinase] + ADP = [pyruvate, water dikinase]-phosphate + AMP + H(+). The catalysed reaction is [pyruvate, water dikinase]-phosphate + phosphate + H(+) = [pyruvate, water dikinase] + diphosphate. In terms of biological role, bifunctional serine/threonine kinase and phosphorylase involved in the regulation of the phosphoenolpyruvate synthase (PEPS) by catalyzing its phosphorylation/dephosphorylation. This is Putative phosphoenolpyruvate synthase regulatory protein from Vibrio vulnificus (strain CMCP6).